The sequence spans 320 residues: Methionyl-tRNA formyltransferase (320 aa).

Position 112-115 (112-115) interacts with (6S)-5,6,7,8-tetrahydrofolate; that stretch reads SLLP.

It belongs to the Fmt family.

The enzyme catalyses L-methionyl-tRNA(fMet) + (6R)-10-formyltetrahydrofolate = N-formyl-L-methionyl-tRNA(fMet) + (6S)-5,6,7,8-tetrahydrofolate + H(+). Its function is as follows. Attaches a formyl group to the free amino group of methionyl-tRNA(fMet). The formyl group appears to play a dual role in the initiator identity of N-formylmethionyl-tRNA by promoting its recognition by IF2 and preventing the misappropriation of this tRNA by the elongation apparatus. In Allorhizobium ampelinum (strain ATCC BAA-846 / DSM 112012 / S4) (Agrobacterium vitis (strain S4)), this protein is Methionyl-tRNA formyltransferase.